Reading from the N-terminus, the 527-residue chain is Peptide chain release factor 3 (527 aa).

The tr-type G domain maps to N9–Q278. GTP contacts are provided by residues S18–T25, D86–H90, and N140–D143.

The protein belongs to the TRAFAC class translation factor GTPase superfamily. Classic translation factor GTPase family. PrfC subfamily.

It localises to the cytoplasm. Functionally, increases the formation of ribosomal termination complexes and stimulates activities of RF-1 and RF-2. It binds guanine nucleotides and has strong preference for UGA stop codons. It may interact directly with the ribosome. The stimulation of RF-1 and RF-2 is significantly reduced by GTP and GDP, but not by GMP. The sequence is that of Peptide chain release factor 3 from Haemophilus influenzae (strain PittEE).